A 50-amino-acid chain; its full sequence is Protein hunchback (50 aa).

3 consecutive C2H2-type zinc fingers follow at residues 1–5, 11–33, and 39–50; these read HLRNH, FKCN…MKSH, and YRCADCTYATKY.

It belongs to the hunchback C2H2-type zinc-finger protein family.

The protein resides in the nucleus. Functionally, gap class segmentation protein that controls development of head structures. This is Protein hunchback (hb) from Platynereis dumerilii (Dumeril's clam worm).